The following is a 169-amino-acid chain: Phosphopantetheine adenylyltransferase (169 aa).

Residue Thr-14 coordinates substrate. Residues 14 to 15 (TF) and His-22 each bind ATP. Substrate-binding residues include Lys-46, Leu-78, and Arg-92. ATP contacts are provided by residues 93–95 (GLR), Glu-103, and 128–134 (HSFISSS).

This sequence belongs to the bacterial CoaD family. In terms of assembly, homohexamer. Mg(2+) is required as a cofactor.

It localises to the cytoplasm. The enzyme catalyses (R)-4'-phosphopantetheine + ATP + H(+) = 3'-dephospho-CoA + diphosphate. The protein operates within cofactor biosynthesis; coenzyme A biosynthesis; CoA from (R)-pantothenate: step 4/5. Functionally, reversibly transfers an adenylyl group from ATP to 4'-phosphopantetheine, yielding dephospho-CoA (dPCoA) and pyrophosphate. The chain is Phosphopantetheine adenylyltransferase from Stenotrophomonas maltophilia (strain R551-3).